The following is a 57-amino-acid chain: Large ribosomal subunit protein bL33 (57 aa).

The protein belongs to the bacterial ribosomal protein bL33 family.

The chain is Large ribosomal subunit protein bL33 from Shewanella sp. (strain W3-18-1).